The primary structure comprises 103 residues: Histone H4 (103 aa).

Positions 1–14 are enriched in gly residues; that stretch reads MSGRGKGGKGLGKG. Residues 1–20 are disordered; the sequence is MSGRGKGGKGLGKGGAKRHR. A DNA-binding region spans residues 17–21; it reads KRHRK.

The protein belongs to the histone H4 family. As to quaternary structure, the nucleosome is a histone octamer containing two molecules each of H2A, H2B, H3 and H4 assembled in one H3-H4 heterotetramer and two H2A-H2B heterodimers. The octamer wraps approximately 147 bp of DNA.

It localises to the nucleus. It is found in the chromosome. Its function is as follows. Core component of nucleosome. Nucleosomes wrap and compact DNA into chromatin, limiting DNA accessibility to the cellular machineries which require DNA as a template. Histones thereby play a central role in transcription regulation, DNA repair, DNA replication and chromosomal stability. DNA accessibility is regulated via a complex set of post-translational modifications of histones, also called histone code, and nucleosome remodeling. This is Histone H4 (H41) from Physarum polycephalum (Slime mold).